Reading from the N-terminus, the 334-residue chain is GTP 3',8-cyclase (334 aa).

One can recognise a Radical SAM core domain in the interval 13–239 (RFHRKFYYLR…KVKAANDGPA (227 aa)). Arg-22 is a GTP binding site. 2 residues coordinate [4Fe-4S] cluster: Cys-29 and Cys-33. Tyr-35 is a binding site for S-adenosyl-L-methionine. Residue Cys-36 participates in [4Fe-4S] cluster binding. A GTP-binding site is contributed by Arg-73. Gly-77 contacts S-adenosyl-L-methionine. Thr-104 contacts GTP. Ser-128 is an S-adenosyl-L-methionine binding site. Lys-165 serves as a coordination point for GTP. Met-199 is a binding site for S-adenosyl-L-methionine. [4Fe-4S] cluster is bound by residues Cys-262 and Cys-265. 267–269 (RLR) is a GTP binding site. Cys-279 serves as a coordination point for [4Fe-4S] cluster.

This sequence belongs to the radical SAM superfamily. MoaA family. In terms of assembly, monomer and homodimer. Requires [4Fe-4S] cluster as cofactor.

The catalysed reaction is GTP + AH2 + S-adenosyl-L-methionine = (8S)-3',8-cyclo-7,8-dihydroguanosine 5'-triphosphate + 5'-deoxyadenosine + L-methionine + A + H(+). It participates in cofactor biosynthesis; molybdopterin biosynthesis. Catalyzes the cyclization of GTP to (8S)-3',8-cyclo-7,8-dihydroguanosine 5'-triphosphate. The polypeptide is GTP 3',8-cyclase (Vibrio vulnificus (strain CMCP6)).